The following is a 187-amino-acid chain: Elongation factor P (187 aa).

Belongs to the elongation factor P family.

It is found in the cytoplasm. It participates in protein biosynthesis; polypeptide chain elongation. Its function is as follows. Involved in peptide bond synthesis. Stimulates efficient translation and peptide-bond synthesis on native or reconstituted 70S ribosomes in vitro. Probably functions indirectly by altering the affinity of the ribosome for aminoacyl-tRNA, thus increasing their reactivity as acceptors for peptidyl transferase. The chain is Elongation factor P from Mycobacterium avium (strain 104).